A 441-amino-acid chain; its full sequence is Trigger factor (441 aa).

Residues Gly161–Ala246 enclose the PPIase FKBP-type domain.

This sequence belongs to the FKBP-type PPIase family. Tig subfamily.

The protein localises to the cytoplasm. It catalyses the reaction [protein]-peptidylproline (omega=180) = [protein]-peptidylproline (omega=0). Involved in protein export. Acts as a chaperone by maintaining the newly synthesized protein in an open conformation. Functions as a peptidyl-prolyl cis-trans isomerase. This Desulfotalea psychrophila (strain LSv54 / DSM 12343) protein is Trigger factor.